The following is a 35-amino-acid chain: Cupiennin-1a (35 aa).

Glutamic acid 1-amide is present on E35.

The protein belongs to the cationic peptide 04 (cupiennin) family. 01 subfamily. In terms of assembly, monomer. Interacts with CSTX-1 (AC P81694), CSTX-9 (AC P58604), and CSTX-13 (AC P83919). Expressed by the venom gland.

It is found in the secreted. In terms of biological role, has antimicrobial activity against B.subtilis, E.coli, E.faecalis, P.denitrificans, P.aeruginosa, P.putida, S.aureus, and S.epidermidis. Shows insecticidal and hemolytic activities. Probably acts by disturbing membrane function with its amphipathic structure. Synergistically increases the insecticidal activity of CSTX-1 (AC P81694), CSTX-9 (AC P58604), and CSTX-13 (AC P83919) by up to 65%. Also inhibits the formation of nitric oxide by neuronal nitric oxide synthase. The polypeptide is Cupiennin-1a (Cupiennius salei (American wandering spider)).